Reading from the N-terminus, the 284-residue chain is Bifunctional protein FolD (284 aa).

NADP(+)-binding positions include Gly-166 to Ser-168 and Ile-232.

Belongs to the tetrahydrofolate dehydrogenase/cyclohydrolase family. In terms of assembly, homodimer.

It catalyses the reaction (6R)-5,10-methylene-5,6,7,8-tetrahydrofolate + NADP(+) = (6R)-5,10-methenyltetrahydrofolate + NADPH. It carries out the reaction (6R)-5,10-methenyltetrahydrofolate + H2O = (6R)-10-formyltetrahydrofolate + H(+). Its pathway is one-carbon metabolism; tetrahydrofolate interconversion. In terms of biological role, catalyzes the oxidation of 5,10-methylenetetrahydrofolate to 5,10-methenyltetrahydrofolate and then the hydrolysis of 5,10-methenyltetrahydrofolate to 10-formyltetrahydrofolate. This chain is Bifunctional protein FolD, found in Azotobacter vinelandii (strain DJ / ATCC BAA-1303).